A 933-amino-acid polypeptide reads, in one-letter code: Progesterone receptor (933 aa).

Residues 1-164 (MTELKAKGPR…PATQRVLSPL (164 aa)) are AF3; mediates transcriptional activation. The interval 1–256 (MTELKAKGPR…AAAGGGAAAV (256 aa)) is disordered. The tract at residues 1 to 566 (MTELKAKGPR…YSFESLPQKI (566 aa)) is modulating, Pro-Rich. At Ser20 the chain carries Phosphoserine. 2 consecutive short sequence motifs (LXXL motif) follow at residues 55-59 (LDGLL) and 115-119 (LDTLL). 2 positions are modified to phosphoserine: Ser130 and Ser162. The interval 165-305 (MSRSGGKAGD…LATTTMDFIH (141 aa)) is mediates transcriptional transrepression. Positions 183 to 187 (KVLPR) match the Nuclear localization signal motif. Phosphoserine is present on residues Ser190 and Ser213. Residues 220–231 (EVEEEDGSESED) are compositionally biased toward acidic residues. At Ser294 the chain carries Phosphoserine; by MAPK1. The segment at 332–380 (GAGAASAFAPPRSSPSASSTPVAVGDFPDCAYPPDADPKDDAYPLYGDF) is disordered. The segment covering 335 to 350 (AASAFAPPRSSPSASS) has biased composition (low complexity). Residue Ser345 is modified to Phosphoserine; by MAPK. A Glycyl lysine isopeptide (Lys-Gly) (interchain with G-Cter in SUMO); alternate cross-link involves residue Lys388. Residue Lys388 forms a Glycyl lysine isopeptide (Lys-Gly) (interchain with G-Cter in ubiquitin); alternate linkage. Residue Ser400 is modified to Phosphoserine; by CDK2. The interval 415-454 (PDFPLGPPPPLPPRAPPSRPGEAAVTAAPASASVSSSSSS) is disordered. A compositionally biased stretch (pro residues) spans 418-433 (PLGPPPPLPPRAPPSR). Over residues 434-454 (PGEAAVTAAPASASVSSSSSS) the composition is skewed to low complexity. Residues 456–546 (STLECILYKA…VYPPYLNYLR (91 aa)) are AF1; mediates transcriptional activation. A Glycyl lysine isopeptide (Lys-Gly) (interchain with G-Cter in SUMO) cross-link involves residue Lys531. 2 consecutive NR C4-type zinc fingers follow at residues 567-587 (CLICGDEASGCHYGVLTCGSC) and 603-627 (CAGRNDCIVDKIRRKNCPACRLRKC). The nuclear receptor DNA-binding region spans 567 to 639 (CLICGDEASG…AGMVLGGRKF (73 aa)). Ser676 carries the post-translational modification Phosphoserine. Residues 679 to 913 (QDIQFFPPLI…EFPEMMSEVI (235 aa)) form the NR LBD domain. The segment at 687 to 933 (LINLLVSIEP…MVKPLLFHKK (247 aa)) is AF2; mediates transcriptional activation. Arg766 lines the progesterone pocket.

This sequence belongs to the nuclear hormone receptor family. As to quaternary structure, interacts with SMARD1 and UNC45A. Interacts with CUEDC2; the interaction promotes ubiquitination, decreases sumoylation, and represses transcriptional activity. Interacts with PIAS3; the interaction promotes sumoylation of PR in a hormone-dependent manner, inhibits DNA-binding, and alters nuclear export. Interacts with SP1; the interaction requires ligand-induced phosphorylation on Ser-345 by ERK1/2-MAPK. Interacts with PRMT2. Interacts with NCOA2 and NCOA1. Interacts with KLF9. Interacts with GTF2B. Phosphorylated on multiple serine sites. Several of these sites are hormone-dependent. Phosphorylation on Ser-294 is highly hormone-dependent and modulates ubiquitination and sumoylation on Lys-388. Phosphorylation on Ser-345 also requires induction by hormone. Basal phosphorylation on Ser-162, Ser-190 and Ser-400 is increased in response to progesterone and can be phosphorylated in vitro by the CDK2-A1 complex. Increased levels of phosphorylation on Ser-400 also in the presence of EGF, heregulin, IGF, PMA and FBS. Phosphorylation at this site by CDK2 is ligand-independent, and increases nuclear translocation and transcriptional activity. Phosphorylation at Ser-162 and Ser-294, but not at Ser-190, is impaired during the G(2)/M phase of the cell cycle. Phosphorylation on Ser-345 by ERK1/2 MAPK is required for interaction with SP1. In terms of processing, sumoylation is hormone-dependent and represses transcriptional activity. Sumoylation on all three sites is enhanced by PIAS3. Desumoylated by SENP1. Sumoylation on Lys-388, the main site of sumoylation, is repressed by ubiquitination on the same site, and modulated by phosphorylation at Ser-294. Post-translationally, ubiquitination is hormone-dependent and represses sumoylation on the same site. Promoted by MAPK-mediated phosphorylation on Ser-294. Ubiquitinated by UBR5, leading to its degradation: UBR5 specifically recognizes and binds ligand-bound PGR when it is not associated with coactivators (NCOAs). In presence of NCOAs, the UBR5-degron is not accessible, preventing its ubiquitination and degradation. Palmitoylated by ZDHHC7 and ZDHHC21. Palmitoylation is required for plasma membrane targeting and for rapid intracellular signaling via ERK and AKT kinases and cAMP generation.

Its subcellular location is the nucleus. It localises to the cytoplasm. Its function is as follows. The steroid hormones and their receptors are involved in the regulation of eukaryotic gene expression and affect cellular proliferation and differentiation in target tissues. Transcriptional activator of several progesteron-dependent promoters in a variety of cell types. Involved in activation of SRC-dependent MAPK signaling on hormone stimulation. The polypeptide is Progesterone receptor (PGR) (Chlorocebus aethiops (Green monkey)).